We begin with the raw amino-acid sequence, 608 residues long: Glutamine--fructose-6-phosphate aminotransferase [isomerizing] (608 aa).

The Nucleophile; for GATase activity role is filled by Cys-2. In terms of domain architecture, Glutamine amidotransferase type-2 spans 2–217; sequence CGIVGILGRE…DGDWVVLTRN (216 aa). SIS domains are found at residues 284–423 and 456–598; these read LPFD…ARGE and LARE…VDQP. Residue Lys-603 is the For Fru-6P isomerization activity of the active site.

As to quaternary structure, homodimer.

It localises to the cytoplasm. It carries out the reaction D-fructose 6-phosphate + L-glutamine = D-glucosamine 6-phosphate + L-glutamate. Functionally, catalyzes the first step in hexosamine metabolism, converting fructose-6P into glucosamine-6P using glutamine as a nitrogen source. This is Glutamine--fructose-6-phosphate aminotransferase [isomerizing] (glmS) from Bradyrhizobium diazoefficiens (strain JCM 10833 / BCRC 13528 / IAM 13628 / NBRC 14792 / USDA 110).